A 370-amino-acid chain; its full sequence is Formate dehydrogenase (370 aa).

Positions 94 and 120 each coordinate substrate. NAD(+)-binding positions include 175–176 (RI), D196, 231–235 (PLHES), T257, D283, and 312–315 (HMSG).

The protein belongs to the D-isomer specific 2-hydroxyacid dehydrogenase family. FDH subfamily. As to quaternary structure, homodimer.

It is found in the cytoplasm. The catalysed reaction is formate + NAD(+) = CO2 + NADH. Its function is as follows. Catalyzes the NAD(+)-dependent oxidation of formate to carbon dioxide. Formate oxidation is the final step in the methanol oxidation pathway in methylotrophic microorganisms. Has a role in the detoxification of exogenous formate in non-methylotrophic organisms. The protein is Formate dehydrogenase of Chaetomium thermophilum (strain DSM 1495 / CBS 144.50 / IMI 039719) (Thermochaetoides thermophila).